The chain runs to 280 residues: Bicarbonate transport system permease protein CmpB (280 aa).

Helical transmembrane passes span 32–52, 99–119, 126–146, 153–173, 198–218, 219–239, and 251–271; these read PIFG…AGLI, YSLA…QPLL, IFQF…LVAL, AIFV…TEGV, ILIP…IGLA, WLAI…GFFI, and IILA…GIAY. Residues 88–266 form the ABC transmembrane type-1 domain; that stretch reads TLASLGRVAQ…YIGAVGLLLD (179 aa).

The protein belongs to the binding-protein-dependent transport system permease family. As to quaternary structure, the complex is composed of two ATP-binding proteins (CmpC and CmpD), a transmembrane protein (CmpB) and a solute-binding protein (CmpA).

It is found in the cell inner membrane. Its function is as follows. Part of the ABC transporter complex CmpABCD involved in bicarbonate transport. Probably responsible for the translocation of the substrate across the membrane. In Synechocystis sp. (strain ATCC 27184 / PCC 6803 / Kazusa), this protein is Bicarbonate transport system permease protein CmpB (cmpB).